Here is a 148-residue protein sequence, read N- to C-terminus: Ribosome-binding factor A (148 aa).

Residues 120 to 148 (AKAREGASYAGDADPYRTAEPDADDAPRA) form a disordered region. Residues 133–148 (DPYRTAEPDADDAPRA) are compositionally biased toward basic and acidic residues.

This sequence belongs to the RbfA family. Monomer. Binds 30S ribosomal subunits, but not 50S ribosomal subunits or 70S ribosomes.

It localises to the cytoplasm. Its function is as follows. One of several proteins that assist in the late maturation steps of the functional core of the 30S ribosomal subunit. Associates with free 30S ribosomal subunits (but not with 30S subunits that are part of 70S ribosomes or polysomes). Required for efficient processing of 16S rRNA. May interact with the 5'-terminal helix region of 16S rRNA. The protein is Ribosome-binding factor A of Micrococcus luteus (strain ATCC 4698 / DSM 20030 / JCM 1464 / CCM 169 / CCUG 5858 / IAM 1056 / NBRC 3333 / NCIMB 9278 / NCTC 2665 / VKM Ac-2230) (Micrococcus lysodeikticus).